The sequence spans 96 residues: Small ribosomal subunit protein bS20 (96 aa).

Residues 1 to 27 form a disordered region; it reads MAKQEVAAKKVKRPTALKRDLQNKKKR.

The protein belongs to the bacterial ribosomal protein bS20 family.

Functionally, binds directly to 16S ribosomal RNA. This chain is Small ribosomal subunit protein bS20, found in Protochlamydia amoebophila (strain UWE25).